Reading from the N-terminus, the 442-residue chain is Probable carboxypeptidase PAAG_00768 (442 aa).

A signal peptide spans 1–20 (MKLQYLVALLFVQAVPPVTA). An N-linked (GlcNAc...) asparagine glycan is attached at asparagine 102. Position 160 (aspartate 160) interacts with Zn(2+). Glutamate 192 serves as the catalytic Proton acceptor. Zn(2+) is bound at residue glutamate 193. An N-linked (GlcNAc...) asparagine glycan is attached at asparagine 343.

Belongs to the peptidase M20A family. Zn(2+) is required as a cofactor.

It is found in the secreted. In Paracoccidioides lutzii (strain ATCC MYA-826 / Pb01) (Paracoccidioides brasiliensis), this protein is Probable carboxypeptidase PAAG_00768.